A 468-amino-acid chain; its full sequence is 6-phospho-beta-galactosidase (468 aa).

The D-galactose 6-phosphate site is built by glutamine 19, histidine 116, asparagine 159, glutamate 160, and asparagine 297. Residue glutamate 160 is the Proton donor of the active site. Residue glutamate 375 is the Nucleophile of the active site. D-galactose 6-phosphate is bound by residues serine 428, tryptophan 429, lysine 435, and tyrosine 437.

The protein belongs to the glycosyl hydrolase 1 family.

The enzyme catalyses a 6-phospho-beta-D-galactoside + H2O = D-galactose 6-phosphate + an alcohol. The protein operates within carbohydrate metabolism; lactose degradation; D-galactose 6-phosphate and beta-D-glucose from lactose 6-phosphate: step 1/1. This Streptococcus pyogenes serotype M12 (strain MGAS2096) protein is 6-phospho-beta-galactosidase.